Here is a 519-residue protein sequence, read N- to C-terminus: ATP synthase subunit beta (519 aa).

Over residues methionine 1–lysine 26 the composition is skewed to low complexity. A disordered region spans residues methionine 1 to serine 40. An ATP-binding site is contributed by glycine 197–threonine 204.

It belongs to the ATPase alpha/beta chains family. F-type ATPases have 2 components, CF(1) - the catalytic core - and CF(0) - the membrane proton channel. CF(1) has five subunits: alpha(3), beta(3), gamma(1), delta(1), epsilon(1). CF(0) has three main subunits: a(1), b(2) and c(9-12). The alpha and beta chains form an alternating ring which encloses part of the gamma chain. CF(1) is attached to CF(0) by a central stalk formed by the gamma and epsilon chains, while a peripheral stalk is formed by the delta and b chains.

The protein localises to the cell inner membrane. It carries out the reaction ATP + H2O + 4 H(+)(in) = ADP + phosphate + 5 H(+)(out). In terms of biological role, produces ATP from ADP in the presence of a proton gradient across the membrane. The catalytic sites are hosted primarily by the beta subunits. In Chelativorans sp. (strain BNC1), this protein is ATP synthase subunit beta.